The sequence spans 326 residues: Beta-ketoacyl-[acyl-carrier-protein] synthase III (326 aa).

Residues C112 and H251 contribute to the active site. Residues 252–256 (QANSR) are ACP-binding. Residue N281 is part of the active site.

It belongs to the thiolase-like superfamily. FabH family. Homodimer.

The protein localises to the cytoplasm. The enzyme catalyses malonyl-[ACP] + acetyl-CoA + H(+) = 3-oxobutanoyl-[ACP] + CO2 + CoA. The protein operates within lipid metabolism; fatty acid biosynthesis. Catalyzes the condensation reaction of fatty acid synthesis by the addition to an acyl acceptor of two carbons from malonyl-ACP. Catalyzes the first condensation reaction which initiates fatty acid synthesis and may therefore play a role in governing the total rate of fatty acid production. Possesses both acetoacetyl-ACP synthase and acetyl transacylase activities. Its substrate specificity determines the biosynthesis of branched-chain and/or straight-chain of fatty acids. This Clostridium botulinum (strain Okra / Type B1) protein is Beta-ketoacyl-[acyl-carrier-protein] synthase III.